We begin with the raw amino-acid sequence, 466 residues long: 23S rRNA (uracil(1939)-C(5))-methyltransferase RlmD (466 aa).

The region spanning 1–54 (MVDVLNIESLDLEARGIAHRDGKVLFVEGALPGERVTVQTVRRKPSYEIAKVEE) is the TRAM domain. [4Fe-4S] cluster is bound by residues Cys67, Cys73, Cys76, and Cys155. Residues Gln264, Phe293, Asn298, Glu314, Asn342, and Asp363 each contribute to the S-adenosyl-L-methionine site. Cys393 functions as the Nucleophile in the catalytic mechanism.

It belongs to the class I-like SAM-binding methyltransferase superfamily. RNA M5U methyltransferase family. RlmD subfamily.

It carries out the reaction uridine(1939) in 23S rRNA + S-adenosyl-L-methionine = 5-methyluridine(1939) in 23S rRNA + S-adenosyl-L-homocysteine + H(+). In terms of biological role, catalyzes the formation of 5-methyl-uridine at position 1939 (m5U1939) in 23S rRNA. This Bordetella pertussis (strain Tohama I / ATCC BAA-589 / NCTC 13251) protein is 23S rRNA (uracil(1939)-C(5))-methyltransferase RlmD.